The primary structure comprises 229 residues: MELLLLSNSTLPGKAWLEHALPLIAEQLQGRRSAVFIPFAGVTQTWDDYTEKTAAVLAPLGVSVTGIHSVVDPVAAIENAEIVIVGGGNTFQLLKQCRERGLLAPITDVVKRGALYIGWSAGANLACPTIRTTNDMPIVDPQGFDALNLFPLQINPHFTNALPEGHKGETREQRIRELLVVAPELTIIGLPEGNWITVSKGHATLGGPNTTYVFKAGEEAVPLEAGHRF.

Active-site charge relay system residues include Ser-120, Asp-135, and His-157.

The protein belongs to the peptidase S51 family.

It localises to the cytoplasm. It carries out the reaction Dipeptidase E catalyzes the hydrolysis of dipeptides Asp-|-Xaa. It does not act on peptides with N-terminal Glu, Asn or Gln, nor does it cleave isoaspartyl peptides.. Its function is as follows. Hydrolyzes dipeptides containing N-terminal aspartate residues. May play a role in allowing the cell to use peptide aspartate to spare carbon otherwise required for the synthesis of the aspartate family of amino acids. The polypeptide is Peptidase E (Shigella flexneri serotype 5b (strain 8401)).